A 753-amino-acid chain; its full sequence is Ion-translocating oxidoreductase complex subunit C (753 aa).

4Fe-4S ferredoxin-type domains follow at residues 367 to 397 (EMGE…QQLY) and 407 to 436 (KATA…VQYF). [4Fe-4S] cluster is bound by residues cysteine 377, cysteine 380, cysteine 383, cysteine 387, cysteine 416, cysteine 419, cysteine 422, and cysteine 426. Disordered regions lie at residues 517–561 (AKPD…RKAA), 606–625 (RKAE…PVDP), 640–659 (RKAE…PVDP), and 705–735 (AKAR…AVAA). A compositionally biased stretch (basic and acidic residues) spans 526–537 (AAREARKAEARA). Low complexity-rich tracts occupy residues 610–622 (QQVA…VAEP), 644–656 (QQVA…VAEP), and 712–735 (QQAA…AVAA).

The protein belongs to the 4Fe4S bacterial-type ferredoxin family. RnfC subfamily. In terms of assembly, the complex is composed of six subunits: RnfA, RnfB, RnfC, RnfD, RnfE and RnfG. [4Fe-4S] cluster serves as cofactor.

It localises to the cell inner membrane. Its function is as follows. Part of a membrane-bound complex that couples electron transfer with translocation of ions across the membrane. The polypeptide is Ion-translocating oxidoreductase complex subunit C (Klebsiella pneumoniae (strain 342)).